The sequence spans 273 residues: Dermonecrotic toxin LruSicTox-alphaIC1b (273 aa).

H5 is an active-site residue. Positions 25 and 27 each coordinate Mg(2+). Catalysis depends on H41, which acts as the Nucleophile. Intrachain disulfides connect C45-C51 and C47-C190. D85 is a Mg(2+) binding site.

Belongs to the arthropod phospholipase D family. Class II subfamily. It depends on Mg(2+) as a cofactor. As to expression, expressed by the venom gland.

Its subcellular location is the secreted. It carries out the reaction an N-(acyl)-sphingosylphosphocholine = an N-(acyl)-sphingosyl-1,3-cyclic phosphate + choline. The catalysed reaction is an N-(acyl)-sphingosylphosphoethanolamine = an N-(acyl)-sphingosyl-1,3-cyclic phosphate + ethanolamine. It catalyses the reaction a 1-acyl-sn-glycero-3-phosphocholine = a 1-acyl-sn-glycero-2,3-cyclic phosphate + choline. The enzyme catalyses a 1-acyl-sn-glycero-3-phosphoethanolamine = a 1-acyl-sn-glycero-2,3-cyclic phosphate + ethanolamine. In terms of biological role, dermonecrotic toxins cleave the phosphodiester linkage between the phosphate and headgroup of certain phospholipids (sphingolipid and lysolipid substrates), forming an alcohol (often choline) and a cyclic phosphate. This toxin acts on sphingomyelin (SM). It may also act on ceramide phosphoethanolamine (CPE), lysophosphatidylcholine (LPC) and lysophosphatidylethanolamine (LPE), but not on lysophosphatidylserine (LPS), and lysophosphatidylglycerol (LPG). It acts by transphosphatidylation, releasing exclusively cyclic phosphate products as second products. Induces dermonecrosis, hemolysis, increased vascular permeability, edema, inflammatory response, and platelet aggregation. This Loxosceles rufescens (Mediterranean recluse spider) protein is Dermonecrotic toxin LruSicTox-alphaIC1b.